The primary structure comprises 542 residues: Chitinase 1 (542 aa).

In terms of domain architecture, GH18 spans F68 to R506. Residues Q186–E187 and G213–S216 each bind chitin. E256 functions as the Proton donor in the catalytic mechanism. Chitin contacts are provided by residues Y257, M323 to D326, and W486.

This sequence belongs to the glycosyl hydrolase 18 family. In terms of assembly, semipurified toxin complex consists of at least YenA1-YenA2-YenB-YenC1-YenC2-Chi1-Chi2. The Yen-TC:K9 subcomplex is about 26 nm tall and 22 nm in diameter with 5-fold symmetry and 5 copies of YenA1, YenA2, Chi1 and Chi2; the chitinase subunits may be solvent accessible on the exterior the complex. The Yen-TC:K9 subcomplex has no insecticidal activity. The native complex with additional YenB, YenC1 and YenC2 subunits is 16 nm taller and is insecticidal; the toxicity-conferring subunits are present at about 1 copy each.

The protein localises to the secreted. The catalysed reaction is Random endo-hydrolysis of N-acetyl-beta-D-glucosaminide (1-&gt;4)-beta-linkages in chitin and chitodextrins.. Its activity is regulated as follows. Toxin complex is secreted when grown at 25 degrees Celsius or less; at higher temperatures the proteins are present intracellularly but not secreted. Functionally, part of an orally active toxin complex (TC) with strong insecticidal effects on larvae of the Coleoptera Costelytra zealandica, Acrossidius tasmania and Adoryphorus couloni and some Lepidoptera larvae. The TC has an endochitinase activity. This subunit might aid infection by degradation of the larval peritrophic membrane. The protein is Chitinase 1 of Yersinia entomophaga.